The following is a 259-amino-acid chain: Global transcriptional regulator CodY (259 aa).

The segment at 1 to 155 is GAF domain; sequence MNLLQKTRKI…GATVVGMEIL (155 aa). The segment at residues 203–222 is a DNA-binding region (H-T-H motif); the sequence is ASKIADRVGITRSVIVNALR. Residue S215 is modified to Phosphoserine.

This sequence belongs to the CodY family.

The protein localises to the cytoplasm. In terms of biological role, DNA-binding global transcriptional regulator which is involved in the adaptive response to starvation and acts by directly or indirectly controlling the expression of numerous genes in response to nutrient availability. During rapid exponential growth, CodY is highly active and represses genes whose products allow adaptation to nutrient depletion. The protein is Global transcriptional regulator CodY of Geobacillus sp. (strain WCH70).